Consider the following 346-residue polypeptide: ATP-dependent 6-phosphofructokinase (346 aa).

ATP contacts are provided by residues G13, 76 to 77, and 106 to 109; these read RL and GEGT. E107 contacts Mg(2+). Substrate contacts are provided by residues 129-131, R166, 173-175, E226, R270, and 276-279; these read TID, MGR, and HIQR. The Proton acceptor role is filled by D131.

It belongs to the phosphofructokinase type A (PFKA) family. Mixed-substrate PFK group III subfamily. Homodimer or homotetramer. It depends on Mg(2+) as a cofactor.

It localises to the cytoplasm. It catalyses the reaction beta-D-fructose 6-phosphate + ATP = beta-D-fructose 1,6-bisphosphate + ADP + H(+). Its pathway is carbohydrate degradation; glycolysis; D-glyceraldehyde 3-phosphate and glycerone phosphate from D-glucose: step 3/4. In terms of biological role, catalyzes the phosphorylation of D-fructose 6-phosphate to fructose 1,6-bisphosphate by ATP, the first committing step of glycolysis. The sequence is that of ATP-dependent 6-phosphofructokinase from Corynebacterium efficiens (strain DSM 44549 / YS-314 / AJ 12310 / JCM 11189 / NBRC 100395).